The sequence spans 300 residues: Cation-efflux pump FieF (300 aa).

Helical transmembrane passes span 12–32 (AALA…VAWY), 40–60 (LAAL…LLVV), 82–102 (AALA…LTGF), and 114–134 (PGVG…LVTY). Aspartate 45 and aspartate 49 together coordinate Zn(2+). The Zn(2+) site is built by histidine 153 and aspartate 157. 2 helical membrane-spanning segments follow: residues 155-175 (QSDV…WYGF) and 178-198 (ADAL…LRMG).

It belongs to the cation diffusion facilitator (CDF) transporter (TC 2.A.4) family. FieF subfamily. Homodimer.

It is found in the cell inner membrane. The catalysed reaction is Zn(2+)(in) + H(+)(out) = Zn(2+)(out) + H(+)(in). It catalyses the reaction Cd(2+)(in) + H(+)(out) = Cd(2+)(out) + H(+)(in). It carries out the reaction Fe(2+)(in) + H(+)(out) = Fe(2+)(out) + H(+)(in). Functionally, divalent metal cation transporter which exports Zn(2+), Cd(2+) and possibly Fe(2+). May be involved in zinc and iron detoxification by efflux. This Serratia proteamaculans (strain 568) protein is Cation-efflux pump FieF.